The primary structure comprises 292 residues: NAD kinase (292 aa).

Asp-73 functions as the Proton acceptor in the catalytic mechanism. Residues 73-74 (DG), 147-148 (NE), His-158, Arg-175, Asp-177, 188-193 (TAYSLS), and Gln-247 contribute to the NAD(+) site.

Belongs to the NAD kinase family. The cofactor is a divalent metal cation.

The protein localises to the cytoplasm. The catalysed reaction is NAD(+) + ATP = ADP + NADP(+) + H(+). Involved in the regulation of the intracellular balance of NAD and NADP, and is a key enzyme in the biosynthesis of NADP. Catalyzes specifically the phosphorylation on 2'-hydroxyl of the adenosine moiety of NAD to yield NADP. The polypeptide is NAD kinase (Salmonella agona (strain SL483)).